Reading from the N-terminus, the 115-residue chain is UPF0125 protein VP0646 (115 aa).

The segment at 92–115 (RAEQAKAAGNADPVTGGKPNALRK) is disordered.

The protein belongs to the UPF0125 (RnfH) family.

This is UPF0125 protein VP0646 from Vibrio parahaemolyticus serotype O3:K6 (strain RIMD 2210633).